A 436-amino-acid chain; its full sequence is UPF0597 protein YhaM (436 aa).

This sequence belongs to the UPF0597 family.

In Salmonella typhi, this protein is UPF0597 protein YhaM.